The following is a 385-amino-acid chain: DnaJ homolog subfamily C member 28 (385 aa).

Positions 48-132 constitute a J domain; sequence EYYRLLNLDE…EGKFKYNTPQ (85 aa). Positions 261-318 form a coiled coil; it reads KEIKDTIEQLREALLMSRKKLGNPLSPTEQKQWAQVCEQFQEKIRKLNKRINDFNLIV.

Functionally, may have a role in protein folding or as a chaperone. The protein is DnaJ homolog subfamily C member 28 (Dnajc28) of Mus musculus (Mouse).